The primary structure comprises 447 residues: Asparagine--tRNA ligase (447 aa).

Belongs to the class-II aminoacyl-tRNA synthetase family. In terms of assembly, homodimer.

The protein resides in the cytoplasm. It catalyses the reaction tRNA(Asn) + L-asparagine + ATP = L-asparaginyl-tRNA(Asn) + AMP + diphosphate + H(+). This chain is Asparagine--tRNA ligase, found in Mycoplasma mobile (strain ATCC 43663 / 163K / NCTC 11711) (Mesomycoplasma mobile).